The following is a 409-amino-acid chain: FAD-dependent monooxygenase phnB (409 aa).

The FAD site is built by Glu-35, Ala-50, Arg-110, and Asp-311.

It belongs to the paxM FAD-dependent monooxygenase family. It depends on FAD as a cofactor.

The enzyme catalyses 3,6,7,9-tetrahydroxy-3-methyl-2,3-dihydro-1H-naphtho[2,1-b]pyran-1-one + NADPH + O2 + H(+) = 2,3,4,7,9-pentahydroxy-6-methyl-1H-phenalen-1-one + NADP(+) + 2 H2O. It functions in the pathway secondary metabolite biosynthesis. FAD-dependent monooxygenase; part of the gene cluster that mediates the biosynthesis of phenalenones such as herqueinone, compounds that have been reported to treat tumors, bacterial infections and/or mycoses, and rheumatic diseases. The non-reducing polyketide synthase phnA synthesizes the heptaketide backbone and cyclizes it into the angular, hemiketal-containing naphtho-gamma-pyrone prephenalenone. The product template (PT) domain of phnA catalyzes only the C4-C9 aldol condensation, which is unprecedented among known PT domains. The transformation of prephenalenone to phenalenones requires an FAD-dependent monooxygenase phnB, which catalyzes the C2 aromatic hydroxylation of prephenalenone and ring opening of the gamma-pyrone ring simultaneously. Subsequent intramolecular deprotonation of C3 phenolic oxygen accelerates phenalenone ring closure to yield the tricyclic phenalenone core with a C2 hydroxylation. The prenyltransferase phnF further catalyzes reverse C-prenylation of phenalenone by direct electrophilic substitution at C6, or possibly via first a forward O-prenylation of a neighboring phenol in phenalenone, followed by a Claisen rearrangement. The hydroalkoxylation enzyme phnH catalyzes the 5-exo-trig cyclization via acid catalysis after the spontaneous deprotonation of 7-OH, which leads to the formation of the dihydrobenzofuran atrovenetin. Atrovenetin is further converted to deoxyherqueinone by the O-methyltransferase phnC which can methylate C2-OH to stabilize the northern portion of the phenalenone core. Finally, the oxidoreductase phnG converts deoxyherqueinone to herqueinone via C6 hydroxylation. The protein is FAD-dependent monooxygenase phnB of Penicillium herquei.